The sequence spans 369 residues: Deoxyuridine 5'-triphosphate nucleotidohydrolase (369 aa).

Substrate-binding positions include Arg-258 to Ser-260 and Phe-364 to Gly-365.

It belongs to the dUTPase family. The cofactor is Mg(2+).

The catalysed reaction is dUTP + H2O = dUMP + diphosphate + H(+). Involved in nucleotide metabolism: produces dUMP, the immediate precursor of thymidine nucleotides and decreases the intracellular concentration of dUTP to avoid uracil incorporation into viral DNA. The sequence is that of Deoxyuridine 5'-triphosphate nucleotidohydrolase from Homo sapiens (Human).